Consider the following 137-residue polypeptide: Integration host factor subunit beta (137 aa).

A compositionally biased stretch (basic and acidic residues) spans 75-92 (KRVPHFKAGKELRERVDR). The disordered stretch occupies residues 75 to 137 (KRVPHFKAGK…EGGGLNLARS (63 aa)). Positions 128–137 (EGGGLNLARS) are enriched in gly residues.

It belongs to the bacterial histone-like protein family. Heterodimer of an alpha and a beta chain.

Functionally, this protein is one of the two subunits of integration host factor, a specific DNA-binding protein that functions in genetic recombination as well as in transcriptional and translational control. The protein is Integration host factor subunit beta of Cupriavidus pinatubonensis (strain JMP 134 / LMG 1197) (Cupriavidus necator (strain JMP 134)).